Reading from the N-terminus, the 85-residue chain is U4-theraphotoxin-Hhn1d (85 aa).

The N-terminal stretch at 1-22 is a signal peptide; the sequence is MKVTLIAILTCAAVLVLHTTAA. Residues 23–48 constitute a propeptide that is removed on maturation; the sequence is EELEAESQLMEVGMPDTELAAVDEER. Disulfide bonds link C52–C66, C56–C77, and C71–C82.

Belongs to the neurotoxin 12 (Hwtx-2) family. 02 (Hwtx-2) subfamily. Expressed by the venom gland.

The protein localises to the secreted. Functionally, postsynaptic neurotoxin. This Cyriopagopus hainanus (Chinese bird spider) protein is U4-theraphotoxin-Hhn1d.